The sequence spans 287 residues: Orotidine 5'-phosphate decarboxylase (287 aa).

Lys97 serves as the catalytic Proton donor.

Belongs to the OMP decarboxylase family. Type 2 subfamily.

It catalyses the reaction orotidine 5'-phosphate + H(+) = UMP + CO2. It participates in pyrimidine metabolism; UMP biosynthesis via de novo pathway; UMP from orotate: step 2/2. This Clostridium perfringens (strain SM101 / Type A) protein is Orotidine 5'-phosphate decarboxylase.